Here is a 249-residue protein sequence, read N- to C-terminus: Coproheme decarboxylase (249 aa).

Fe-coproporphyrin III is bound by residues Arg-131, 145–149, His-172, and Gln-185; that span reads YPMDK. Residue Tyr-145 is part of the active site.

This sequence belongs to the ChdC family. Type 1 subfamily. Requires Fe-coproporphyrin III as cofactor.

The enzyme catalyses Fe-coproporphyrin III + 2 H2O2 + 2 H(+) = heme b + 2 CO2 + 4 H2O. The catalysed reaction is Fe-coproporphyrin III + H2O2 + H(+) = harderoheme III + CO2 + 2 H2O. It carries out the reaction harderoheme III + H2O2 + H(+) = heme b + CO2 + 2 H2O. Its pathway is porphyrin-containing compound metabolism; protoheme biosynthesis. Involved in coproporphyrin-dependent heme b biosynthesis. Catalyzes the decarboxylation of Fe-coproporphyrin III (coproheme) to heme b (protoheme IX), the last step of the pathway. The reaction occurs in a stepwise manner with a three-propionate intermediate. This chain is Coproheme decarboxylase, found in Staphylococcus saprophyticus subsp. saprophyticus (strain ATCC 15305 / DSM 20229 / NCIMB 8711 / NCTC 7292 / S-41).